The following is a 118-amino-acid chain: NADH-quinone oxidoreductase subunit A (118 aa).

A run of 3 helical transmembrane segments spans residues 8-28, 64-84, and 87-107; these read IGIFLVAAISFPLIPLVLAFF, ALAFVIFDIEVIFLYPWAVAF, and VGLYGLIAATIFLLMLFAGLL.

This sequence belongs to the complex I subunit 3 family. NDH-1 is composed of 14 different subunits. Subunits NuoA, H, J, K, L, M, N constitute the membrane sector of the complex.

The protein localises to the cell membrane. It catalyses the reaction a quinone + NADH + 5 H(+)(in) = a quinol + NAD(+) + 4 H(+)(out). In terms of biological role, NDH-1 shuttles electrons from NADH, via FMN and iron-sulfur (Fe-S) centers, to quinones in the respiratory chain. The immediate electron acceptor for the enzyme in this species is believed to be ubiquinone. Couples the redox reaction to proton translocation (for every two electrons transferred, four hydrogen ions are translocated across the cytoplasmic membrane), and thus conserves the redox energy in a proton gradient. The sequence is that of NADH-quinone oxidoreductase subunit A from Chloroflexus aurantiacus (strain ATCC 29366 / DSM 635 / J-10-fl).